The chain runs to 178 residues: Inorganic pyrophosphatase (178 aa).

Substrate-binding residues include Lys-30, Arg-44, and Tyr-56. Mg(2+) is bound by residues Asp-66, Asp-71, and Asp-103. Tyr-140 provides a ligand contact to substrate.

Belongs to the PPase family. Homohexamer. It depends on Mg(2+) as a cofactor.

It is found in the cytoplasm. It carries out the reaction diphosphate + H2O = 2 phosphate + H(+). In terms of biological role, catalyzes the hydrolysis of inorganic pyrophosphate (PPi) forming two phosphate ions. This is Inorganic pyrophosphatase from Pyrococcus abyssi (strain GE5 / Orsay).